Reading from the N-terminus, the 735-residue chain is Protostadienol synthase A (735 aa).

Residues 129–170 (KNEMIRYLLNFVNEDGGWGLWINSPSTVFGTTMNYTMLRILG) form a PFTB 1 repeat. Asp-460 acts as the Proton donor in catalysis. 3 PFTB repeats span residues 487–528 (LAEA…YDNV), 564–604 (MARC…ETVG), and 613–660 (CRNA…ALMG).

Belongs to the terpene cyclase/mutase family.

It catalyses the reaction (S)-2,3-epoxysqualene = (17Z)-protosta-17(20),24-dien-3beta-ol. Protostadienol synthase which cyclizes (3S)-oxidosqualene to (17Z)-protosta-17(20),24-dien-3-beta-ol (protostadienol), the biosynthetic precursor of helvolic acid, a secondary metabolite which promotes virulence. This is Protostadienol synthase A (PDSA) from Arthroderma gypseum (strain ATCC MYA-4604 / CBS 118893) (Microsporum gypseum).